The chain runs to 399 residues: Type II secretion system protein L (399 aa).

At Met1–Pro247 the chain is on the cytoplasmic side. The helical transmembrane segment at Trp248 to Gly264 threads the bilayer. The Periplasmic portion of the chain corresponds to Glu265–Pro399.

The protein belongs to the GSP L family. As to quaternary structure, type II secretion system is composed of four main components: the outer membrane complex, the inner membrane complex, the cytoplasmic secretion ATPase and the periplasm-spanning pseudopilus. Forms homodimers. Interacts with OutM/GspM. Interacts with OutE/GspE and OutF/GspF.

The protein resides in the cell inner membrane. Inner membrane component of the type II secretion system required for the energy-dependent secretion of extracellular factors such as proteases and toxins from the periplasm. Plays a role in the complex assembly and recruits OutM resulting in a stable complex in the inner membrane. Provides thus a link between the energy-providing OutE protein in the cytoplasm and the rest of the T2SS machinery. The polypeptide is Type II secretion system protein L (outL) (Dickeya chrysanthemi (Pectobacterium chrysanthemi)).